The sequence spans 200 residues: 3-isopropylmalate dehydratase small subunit (200 aa).

This sequence belongs to the LeuD family. LeuD type 1 subfamily. In terms of assembly, heterodimer of LeuC and LeuD.

The enzyme catalyses (2R,3S)-3-isopropylmalate = (2S)-2-isopropylmalate. Its pathway is amino-acid biosynthesis; L-leucine biosynthesis; L-leucine from 3-methyl-2-oxobutanoate: step 2/4. Catalyzes the isomerization between 2-isopropylmalate and 3-isopropylmalate, via the formation of 2-isopropylmaleate. In Campylobacter jejuni subsp. doylei (strain ATCC BAA-1458 / RM4099 / 269.97), this protein is 3-isopropylmalate dehydratase small subunit.